We begin with the raw amino-acid sequence, 159 residues long: 6,7-dimethyl-8-ribityllumazine synthase (159 aa).

5-amino-6-(D-ribitylamino)uracil contacts are provided by residues W26, 57–59 (ALE), and 79–81 (CVI). Residue 84–85 (GT) participates in (2S)-2-hydroxy-3-oxobutyl phosphate binding. Residue H87 is the Proton donor of the active site. N112 serves as a coordination point for 5-amino-6-(D-ribitylamino)uracil. R126 lines the (2S)-2-hydroxy-3-oxobutyl phosphate pocket.

The protein belongs to the DMRL synthase family.

The enzyme catalyses (2S)-2-hydroxy-3-oxobutyl phosphate + 5-amino-6-(D-ribitylamino)uracil = 6,7-dimethyl-8-(1-D-ribityl)lumazine + phosphate + 2 H2O + H(+). Its pathway is cofactor biosynthesis; riboflavin biosynthesis; riboflavin from 2-hydroxy-3-oxobutyl phosphate and 5-amino-6-(D-ribitylamino)uracil: step 1/2. Functionally, catalyzes the formation of 6,7-dimethyl-8-ribityllumazine by condensation of 5-amino-6-(D-ribitylamino)uracil with 3,4-dihydroxy-2-butanone 4-phosphate. This is the penultimate step in the biosynthesis of riboflavin. This chain is 6,7-dimethyl-8-ribityllumazine synthase, found in Corynebacterium efficiens (strain DSM 44549 / YS-314 / AJ 12310 / JCM 11189 / NBRC 100395).